A 723-amino-acid polypeptide reads, in one-letter code: Enolase-phosphatase E1 (723 aa).

Residues 126 to 127 (SS) and K160 contribute to the substrate site. Residues 239 to 723 (GAGAKRKIDE…TPTPPIEAES (485 aa)) form a disordered region. 2 stretches are compositionally biased toward basic and acidic residues: residues 262–284 (VKKD…DEPA) and 293–308 (AAKE…KMEV). A compositionally biased stretch (low complexity) spans 311–320 (AAAAAAPPAD). 6 stretches are compositionally biased toward basic and acidic residues: residues 322-406 (AEEK…VVEE), 419-443 (AEEK…KPAE), 468-479 (EPAKEKPAEAEA), 487-496 (TKAEVVEKPA), 511-565 (SADK…KGEE), and 577-593 (VEAK…KSDA). Composition is skewed to low complexity over residues 596-606 (VSTTTTTTSTE) and 636-647 (NGEAEPAAEAVV). Basic and acidic residues predominate over residues 653–666 (GKHEEKGDSDKEND).

It belongs to the HAD-like hydrolase superfamily. MasA/MtnC family. Monomer.

It localises to the cytoplasm. The protein resides in the nucleus. It catalyses the reaction 5-methylsulfanyl-2,3-dioxopentyl phosphate + H2O = 1,2-dihydroxy-5-(methylsulfanyl)pent-1-en-3-one + phosphate. Its pathway is amino-acid biosynthesis; L-methionine biosynthesis via salvage pathway; L-methionine from S-methyl-5-thio-alpha-D-ribose 1-phosphate: step 3/6. It functions in the pathway amino-acid biosynthesis; L-methionine biosynthesis via salvage pathway; L-methionine from S-methyl-5-thio-alpha-D-ribose 1-phosphate: step 4/6. Its function is as follows. Bifunctional enzyme that catalyzes the enolization of 2,3-diketo-5-methylthiopentyl-1-phosphate (DK-MTP-1-P) into the intermediate 2-hydroxy-3-keto-5-methylthiopentenyl-1-phosphate (HK-MTPenyl-1-P), which is then dephosphorylated to form the acireductone 1,2-dihydroxy-3-keto-5-methylthiopentene (DHK-MTPene). In Culex quinquefasciatus (Southern house mosquito), this protein is Enolase-phosphatase E1.